A 293-amino-acid chain; its full sequence is Small ribosomal subunit biogenesis GTPase RsgA (293 aa).

Residues 63–223 form the CP-type G domain; that stretch reads KNELVRPPIA…VADTPGFSSL (161 aa). GTP-binding positions include 112–115 and 166–174; these read SKMD and GQSGVGKSS. Residues C247, C252, H254, and C260 each coordinate Zn(2+).

The protein belongs to the TRAFAC class YlqF/YawG GTPase family. RsgA subfamily. Monomer. Associates with 30S ribosomal subunit, binds 16S rRNA. The cofactor is Zn(2+).

The protein localises to the cytoplasm. In terms of biological role, one of several proteins that assist in the late maturation steps of the functional core of the 30S ribosomal subunit. Helps release RbfA from mature subunits. May play a role in the assembly of ribosomal proteins into the subunit. Circularly permuted GTPase that catalyzes slow GTP hydrolysis, GTPase activity is stimulated by the 30S ribosomal subunit. This Bacillus anthracis protein is Small ribosomal subunit biogenesis GTPase RsgA.